Consider the following 442-residue polypeptide: ATP-dependent RNA helicase SUB2 (442 aa).

A Q motif motif is present at residues threonine 59–glutamine 87. The Helicase ATP-binding domain maps to isoleucine 90–valine 265. Alanine 103–threonine 110 is a binding site for ATP. The short motif at aspartate 212–aspartate 215 is the DECD box element. Residues lysine 293–serine 438 enclose the Helicase C-terminal domain.

The protein belongs to the DEAD box helicase family. DECD subfamily.

The protein localises to the nucleus. It catalyses the reaction ATP + H2O = ADP + phosphate + H(+). In terms of biological role, ATP-binding RNA helicase involved in transcription elongation and required for the export of mRNA out of the nucleus. SUB2 also plays a role in pre-mRNA splicing and spliceosome assembly. May be involved in rDNA and telomeric silencing, and maintenance of genome integrity. The polypeptide is ATP-dependent RNA helicase SUB2 (SUB2) (Ajellomyces capsulatus (strain NAm1 / WU24) (Darling's disease fungus)).